The primary structure comprises 360 residues: GTP 3',8-cyclase (360 aa).

The region spanning 33-251 is the Radical SAM core domain; the sequence is RFGRSATDLR…LQPHFRLRPD (219 aa). Arg-42 provides a ligand contact to GTP. [4Fe-4S] cluster-binding residues include Cys-49 and Cys-53. Tyr-55 contacts S-adenosyl-L-methionine. Cys-56 is a [4Fe-4S] cluster binding site. Arg-93 contacts GTP. Gly-97 lines the S-adenosyl-L-methionine pocket. Residue Thr-124 participates in GTP binding. Ser-148 is a binding site for S-adenosyl-L-methionine. Lys-185 is a GTP binding site. Position 219 (Met-219) interacts with S-adenosyl-L-methionine. [4Fe-4S] cluster-binding residues include Cys-287 and Cys-290. 292–294 contacts GTP; the sequence is RTR. Cys-304 contributes to the [4Fe-4S] cluster binding site.

This sequence belongs to the radical SAM superfamily. MoaA family. As to quaternary structure, monomer and homodimer. Requires [4Fe-4S] cluster as cofactor.

The catalysed reaction is GTP + AH2 + S-adenosyl-L-methionine = (8S)-3',8-cyclo-7,8-dihydroguanosine 5'-triphosphate + 5'-deoxyadenosine + L-methionine + A + H(+). It participates in cofactor biosynthesis; molybdopterin biosynthesis. Its function is as follows. Catalyzes the cyclization of GTP to (8S)-3',8-cyclo-7,8-dihydroguanosine 5'-triphosphate. The protein is GTP 3',8-cyclase of Mycobacterium marinum (strain ATCC BAA-535 / M).